Here is a 325-residue protein sequence, read N- to C-terminus: Probable siderophore-binding lipoprotein YfiY (325 aa).

The first 20 residues, 1–20, serve as a signal peptide directing secretion; the sequence is MKKHISMLFVFLMAVMVLSA. The N-palmitoyl cysteine moiety is linked to residue cysteine 21. A lipid anchor (S-diacylglycerol cysteine) is attached at cysteine 21. A Fe/B12 periplasmic-binding domain is found at 56–325; sequence RIVVLTNEGT…DIETYFLKTK (270 aa). Serine 290 bears the Phosphoserine mark. Threonine 302 bears the Phosphothreonine mark.

This sequence belongs to the bacterial solute-binding protein 8 family. In terms of assembly, the complex is composed of one ATP-binding protein (YusV), two transmembrane proteins (YfiZ and YfhA) and a solute-binding protein (YfiY). Interacts with FloT.

It localises to the cell membrane. It is found in the cytoplasm. The protein localises to the membrane raft. In terms of biological role, part of the ABC transporter complex YfiYZ/YfhA/YusV involved in import of the iron-hydroxamate siderophores schizokinen, arthrobactin and corprogen. Binds the siderophores and delivers them to the surface of YfiZ/YfhA. This chain is Probable siderophore-binding lipoprotein YfiY (yfiY), found in Bacillus subtilis (strain 168).